The following is a 441-amino-acid chain: Glutamate--tRNA ligase 2 (441 aa).

The 'HIGH' region signature appears at 6–16 (PSPTGDMHIGN). The short motif at 231–235 (KMSKR) is the 'KMSKS' region element. K234 contacts ATP.

It belongs to the class-I aminoacyl-tRNA synthetase family. Glutamate--tRNA ligase type 1 subfamily. In terms of assembly, monomer.

The protein resides in the cytoplasm. The enzyme catalyses tRNA(Glu) + L-glutamate + ATP = L-glutamyl-tRNA(Glu) + AMP + diphosphate. Functionally, catalyzes the attachment of glutamate to tRNA(Glu) in a two-step reaction: glutamate is first activated by ATP to form Glu-AMP and then transferred to the acceptor end of tRNA(Glu). The protein is Glutamate--tRNA ligase 2 of Helicobacter hepaticus (strain ATCC 51449 / 3B1).